The following is a 488-amino-acid chain: Aspartyl/glutamyl-tRNA(Asn/Gln) amidotransferase subunit B (488 aa).

This sequence belongs to the GatB/GatE family. GatB subfamily. As to quaternary structure, heterotrimer of A, B and C subunits.

The catalysed reaction is L-glutamyl-tRNA(Gln) + L-glutamine + ATP + H2O = L-glutaminyl-tRNA(Gln) + L-glutamate + ADP + phosphate + H(+). It carries out the reaction L-aspartyl-tRNA(Asn) + L-glutamine + ATP + H2O = L-asparaginyl-tRNA(Asn) + L-glutamate + ADP + phosphate + 2 H(+). Its function is as follows. Allows the formation of correctly charged Asn-tRNA(Asn) or Gln-tRNA(Gln) through the transamidation of misacylated Asp-tRNA(Asn) or Glu-tRNA(Gln) in organisms which lack either or both of asparaginyl-tRNA or glutaminyl-tRNA synthetases. The reaction takes place in the presence of glutamine and ATP through an activated phospho-Asp-tRNA(Asn) or phospho-Glu-tRNA(Gln). The sequence is that of Aspartyl/glutamyl-tRNA(Asn/Gln) amidotransferase subunit B from Ralstonia pickettii (strain 12J).